Consider the following 483-residue polypeptide: UDP-N-acetylmuramoyl-L-alanyl-D-glutamate--2,6-diaminopimelate ligase (483 aa).

A UDP-N-acetyl-alpha-D-muramoyl-L-alanyl-D-glutamate-binding site is contributed by Ser30. 109–115 (GTNGKTT) provides a ligand contact to ATP. Residues 151–152 (TT), Ser178, and Arg186 each bind UDP-N-acetyl-alpha-D-muramoyl-L-alanyl-D-glutamate. At Lys218 the chain carries N6-carboxylysine. Residues Arg380, 403 to 406 (DNPR), Gly453, and Glu457 contribute to the meso-2,6-diaminopimelate site. The short motif at 403–406 (DNPR) is the Meso-diaminopimelate recognition motif element.

Belongs to the MurCDEF family. MurE subfamily. Requires Mg(2+) as cofactor. In terms of processing, carboxylation is probably crucial for Mg(2+) binding and, consequently, for the gamma-phosphate positioning of ATP.

The protein resides in the cytoplasm. It carries out the reaction UDP-N-acetyl-alpha-D-muramoyl-L-alanyl-D-glutamate + meso-2,6-diaminopimelate + ATP = UDP-N-acetyl-alpha-D-muramoyl-L-alanyl-gamma-D-glutamyl-meso-2,6-diaminopimelate + ADP + phosphate + H(+). It functions in the pathway cell wall biogenesis; peptidoglycan biosynthesis. Functionally, catalyzes the addition of meso-diaminopimelic acid to the nucleotide precursor UDP-N-acetylmuramoyl-L-alanyl-D-glutamate (UMAG) in the biosynthesis of bacterial cell-wall peptidoglycan. This Chlamydia pneumoniae (Chlamydophila pneumoniae) protein is UDP-N-acetylmuramoyl-L-alanyl-D-glutamate--2,6-diaminopimelate ligase.